A 105-amino-acid polypeptide reads, in one-letter code: Large ribosomal subunit protein eL42 (105 aa).

Positions 23 to 52 (KVTQYKKGKESRLAQGRRRYDSKQKGFGGQ) are disordered. The segment covering 29-46 (KGKESRLAQGRRRYDSKQ) has biased composition (basic and acidic residues).

The protein belongs to the eukaryotic ribosomal protein eL42 family.

In Brugia malayi (Filarial nematode worm), this protein is Large ribosomal subunit protein eL42 (rpl-44).